We begin with the raw amino-acid sequence, 465 residues long: Ribosomal oxygenase 2 (465 aa).

The region spanning 139-271 (QPQRFKDELW…NSWGDFLLDT (133 aa)) is the JmjC domain. Residues H179, D181, and H240 each coordinate Fe cation. S309 bears the Phosphoserine mark.

It belongs to the ROX family. MINA53 subfamily. Fe(2+) serves as cofactor. Expressed in liver, skeletal muscle, heart, pancreas, and placenta. Not detected in brain, lung or kidney. Expressed in several lung cancer tissues, but is barely detected in the adjacent non-cancerous tissues. Also highly expressed in several esophageal squamous cell carcinoma (ESCC), and colon cancer tissues, and in various cancer cell lines.

The protein localises to the nucleus. The protein resides in the nucleolus. It carries out the reaction L-histidyl-[protein] + 2-oxoglutarate + O2 = (3S)-3-hydroxy-L-histidyl-[protein] + succinate + CO2. It catalyses the reaction L-histidyl-[ribosomal protein uL15] + 2-oxoglutarate + O2 = (3S)-3-hydroxy-L-histidyl-[ribosomal protein uL15] + succinate + CO2. Functionally, oxygenase that can act as both a histone lysine demethylase and a ribosomal histidine hydroxylase. Is involved in the demethylation of trimethylated 'Lys-9' on histone H3 (H3K9me3), leading to an increase in ribosomal RNA expression. Also catalyzes the hydroxylation of 60S ribosomal protein L27a on 'His-39'. May play an important role in cell growth and survival. May be involved in ribosome biogenesis, most likely during the assembly process of pre-ribosomal particles. The sequence is that of Ribosomal oxygenase 2 from Homo sapiens (Human).